The following is a 727-amino-acid chain: Prolyl endopeptidase-like (727 aa).

Met1 is modified (N-acetylmethionine). Residues Ser559, Asp645, and His690 each act as charge relay system in the active site.

The protein belongs to the peptidase S9A family. As to quaternary structure, homodimer. Interacts with the AP-1 complex. In terms of tissue distribution, expressed in pyramidal neurons of the temporal cortex and neocortex (at protein level). Widely expressed. Expressed at higher level in brain, skeletal muscle, heart and kidney. Expressed at the endplates in the neuromuscular junction.

The protein localises to the cytoplasm. The protein resides in the cytosol. It is found in the golgi apparatus. Its subcellular location is the trans-Golgi network. It localises to the cytoskeleton. The protein localises to the nucleus. Its activity is regulated as follows. Inhibited by PMSF and Prefabloc, as well as leupeptin at high concentrations. Partially inhibited by TPCK, a chymotrypsin inhibitor and E64, a cysteine protease inhibitor. Not affected by 4-amidinophenyl-methanesulfonyl fluoride (APMSF), pepstatin or EDTA. Inhibited by 1-isobutyl-3-oxo-3,5,6,7-tetrahydro-2H-cyclopenta[c]pyridine-4-carbonitrile. Serine peptidase whose precise substrate specificity remains unclear. Does not cleave peptides after a arginine or lysine residue. Regulates trans-Golgi network morphology and sorting by regulating the membrane binding of the AP-1 complex. May play a role in the regulation of synaptic vesicle exocytosis. The sequence is that of Prolyl endopeptidase-like (PREPL) from Homo sapiens (Human).